The following is a 386-amino-acid chain: F420 non-reducing hydrogenase I small subunit (386 aa).

A signal peptide (tat-type signal) is located at residues 1–51; the sequence is MVEMSTGTTNLVRTLDSMDFLKMDRRTFMKAVSALGATAFLGTYQTEIVNA. Residues cysteine 67, cysteine 70, cysteine 178, cysteine 227, histidine 273, cysteine 276, cysteine 296, and cysteine 302 each coordinate [4Fe-4S] cluster. [3Fe-4S] cluster-binding residues include cysteine 311, cysteine 330, and cysteine 333.

It belongs to the [NiFe]/[NiFeSe] hydrogenase small subunit family. In terms of assembly, composed of a large subunit (VhoA), a small subunit (VhoG) and a cytochrome subunit (VhoC). [4Fe-4S] cluster serves as cofactor. [3Fe-4S] cluster is required as a cofactor. Post-translationally, predicted to be exported by the Tat system. The position of the signal peptide cleavage has not been experimentally proven.

Its subcellular location is the cell membrane. The catalysed reaction is methanophenazine + H2 = dihydromethanophenazine. Its function is as follows. Part of the F420 non-reducing hydrogenase I complex that catalyzes the reduction of methanophenazine to dihydromethanophenazine. This is F420 non-reducing hydrogenase I small subunit from Methanosarcina mazei (strain ATCC BAA-159 / DSM 3647 / Goe1 / Go1 / JCM 11833 / OCM 88) (Methanosarcina frisia).